The sequence spans 127 residues: Fluoride-specific ion channel FluC (127 aa).

4 helical membrane passes run 4 to 24 (FSILGFIALGGAIGACSRYLV), 38 to 58 (YGTLTVNVVGSFIMGLLIAAF), 71 to 91 (VIGLGFLGALTTFSTFSMDNV), and 104 to 124 (LNILLNVVLSISAAWIGFQLL). 2 residues coordinate Na(+): Gly-78 and Thr-81.

It belongs to the fluoride channel Fluc/FEX (TC 1.A.43) family.

It is found in the cell inner membrane. The catalysed reaction is fluoride(in) = fluoride(out). With respect to regulation, na(+) is not transported, but it plays an essential structural role and its presence is essential for fluoride channel function. Its function is as follows. Fluoride-specific ion channel. Important for reducing fluoride concentration in the cell, thus reducing its toxicity. The polypeptide is Fluoride-specific ion channel FluC (Vibrio parahaemolyticus serotype O3:K6 (strain RIMD 2210633)).